The chain runs to 298 residues: Inosose dehydratase (298 aa).

This sequence belongs to the IolE/MocC family. Glutathione is required as a cofactor. The cofactor is Co(2+). It depends on Mn(2+) as a cofactor.

The enzyme catalyses scyllo-inosose = 3D-3,5/4-trihydroxycyclohexane-1,2-dione + H2O. In terms of biological role, catalyzes the dehydration of inosose (2-keto-myo-inositol, 2KMI or 2,4,6/3,5-pentahydroxycyclohexanone) to 3D-(3,5/4)-trihydroxycyclohexane-1,2-dione (D-2,3-diketo-4-deoxy-epi-inositol). This chain is Inosose dehydratase, found in Histophilus somni (strain 129Pt) (Haemophilus somnus).